A 152-amino-acid chain; its full sequence is Photosystem II extrinsic protein U, chloroplastic (152 aa).

The N-terminal 35 residues, 1–35 (MDSTAFVGAAAPLRVAAAARSTICMAAADDKPVVS), are a transit peptide targeting the chloroplast. The transit peptide at 36-59 (RRAALTGAAAAALAAVAGSLPALA) directs the protein to the thylakoid.

Belongs to the PsbU family. PSII is composed of 1 copy each of membrane proteins PsbA, PsbB, PsbC, PsbD, PsbE, PsbF, PsbH, PsbI, PsbJ, PsbK, PsbL, PsbM, PsbT, PsbX, PsbY, PsbZ, Psb30/Ycf12, at least 3 peripheral proteins of the oxygen-evolving complex and a large number of cofactors. It forms dimeric complexes. The oxygen-evolving complex in red algae is composed of PsbO (OEC33), PsbQ', cytochrome c-550 and PsbU. Post-translationally, predicted to be translocated into the thylakoid lumen by the Tat system.

The protein resides in the plastid. Its subcellular location is the chloroplast thylakoid membrane. In terms of biological role, one of the extrinsic, lumenal subunits of photosystem II (PSII). PSII is a light-driven water plastoquinone oxidoreductase, using light energy to abstract electrons from H(2)O, generating a proton gradient subsequently used for ATP formation. The extrinsic proteins stabilize the structure of photosystem II oxygen-evolving complex (OEC), the ion environment of oxygen evolution and protect the OEC against heat-induced inactivation. This chain is Photosystem II extrinsic protein U, chloroplastic, found in Pyropia yezoensis (Susabi-nori).